Consider the following 117-residue polypeptide: S-adenosylmethionine decarboxylase proenzyme (117 aa).

The active-site Schiff-base intermediate with substrate; via pyruvic acid is the Ser-63. The residue at position 63 (Ser-63) is a Pyruvic acid (Ser); by autocatalysis. The active-site Proton acceptor; for processing activity is the His-68. The Proton donor; for catalytic activity role is filled by Cys-83.

Belongs to the prokaryotic AdoMetDC family. Type 1 subfamily. Heterotetramer of two alpha and two beta chains arranged as a dimer of alpha/beta heterodimers. Pyruvate is required as a cofactor. Post-translationally, is synthesized initially as an inactive proenzyme. Formation of the active enzyme involves a self-maturation process in which the active site pyruvoyl group is generated from an internal serine residue via an autocatalytic post-translational modification. Two non-identical subunits are generated from the proenzyme in this reaction, and the pyruvate is formed at the N-terminus of the alpha chain, which is derived from the carboxyl end of the proenzyme. The post-translation cleavage follows an unusual pathway, termed non-hydrolytic serinolysis, in which the side chain hydroxyl group of the serine supplies its oxygen atom to form the C-terminus of the beta chain, while the remainder of the serine residue undergoes an oxidative deamination to produce ammonia and the pyruvoyl group blocking the N-terminus of the alpha chain.

It carries out the reaction S-adenosyl-L-methionine + H(+) = S-adenosyl 3-(methylsulfanyl)propylamine + CO2. It participates in amine and polyamine biosynthesis; S-adenosylmethioninamine biosynthesis; S-adenosylmethioninamine from S-adenosyl-L-methionine: step 1/1. Functionally, catalyzes the decarboxylation of S-adenosylmethionine to S-adenosylmethioninamine (dcAdoMet), the propylamine donor required for the synthesis of the polyamines spermine and spermidine from the diamine putrescine. In Methanococcus aeolicus (strain ATCC BAA-1280 / DSM 17508 / OCM 812 / Nankai-3), this protein is S-adenosylmethionine decarboxylase proenzyme.